Here is a 247-residue protein sequence, read N- to C-terminus: UPF0273 protein PF1931 (247 aa).

Residues 3-247 enclose the KaiC domain; that stretch reads RRVKTGIPGM…VLKRGRIYEL (245 aa). 30–37 provides a ligand contact to ATP; it reads GGPGTGKS.

Belongs to the UPF0273 family.

In Pyrococcus furiosus (strain ATCC 43587 / DSM 3638 / JCM 8422 / Vc1), this protein is UPF0273 protein PF1931.